Here is a 247-residue protein sequence, read N- to C-terminus: Protein NipSnap homolog 3B (247 aa).

Residues lysine 45, lysine 48, lysine 57, and lysine 166 each carry the N6-succinyllysine modification.

It belongs to the NipSnap family.

It is found in the cytoplasm. The protein resides in the cytosol. This chain is Protein NipSnap homolog 3B (Nipsnap3b), found in Mus musculus (Mouse).